The following is a 425-amino-acid chain: MKEIIRSIKGMHDYIPDDVITWQYIEYIVKRILKNYCYNEIRFPLIEKTSLFAHSIGNITDIIEKEMYSFKDKKNKKITLRPEGTIGCMRACINKGLLRTSKQKLWYLGPMFRYERPQHGRYRQFHQFGIEVLGMSGPDIDLEIILLVERILRTLNISNYVQLELNSIGSYESRLHYKKILFSYFKQYEACLDEDCKRRLYVNPLRILDSKDKNIKAIINNAPILMDFIDDNSLIHFENLCKLMKNIGISYVVNYKLVRGLDYYNKTVFEWKTNLLGAKDAICAGGRYDNLSKSLGVTFIPAIGCAIGMERLVLLIKSLKLKPKTNNAIDVFIIFLKDNIQIEAIKLSELVRTQFPKKKIMLSILSSNLRKQFSTANKIKARIVLLLGPNEVKNNLILLKDLTSGYQKSFLKNKIIEELELAFKN.

This sequence belongs to the class-II aminoacyl-tRNA synthetase family. As to quaternary structure, homodimer.

The protein resides in the cytoplasm. The enzyme catalyses tRNA(His) + L-histidine + ATP = L-histidyl-tRNA(His) + AMP + diphosphate + H(+). The sequence is that of Histidine--tRNA ligase from Buchnera aphidicola subsp. Baizongia pistaciae (strain Bp).